Here is a 1746-residue protein sequence, read N- to C-terminus: Tenascin (1746 aa).

The signal sequence occupies residues 1–22 (MGVVTRLLVGTFLASLALPAQG). Residues 23 to 185 (GVLKKVIRHK…CEPGWKGPNC (163 aa)) form an involved in hexamer formation region. The N-linked (GlcNAc...) asparagine glycan is linked to Asn38. 3 positions are modified to phosphoserine: Ser65, Ser70, and Ser72. Residue Ser72 is glycosylated (O-linked (Xyl...) (chondroitin sulfate) serine). Residues 118 to 145 (DVKELLSRLEELENLVSSLREQCTSGAG) are a coiled coil. 2 N-linked (GlcNAc...) asparagine glycosylation sites follow: Asn166 and Asn184. The EGF-like 1; incomplete domain occupies 174-186 (CVCEPGWKGPNCS). EGF-like domains are found at residues 187–217 (EPECPSNCHLRGQCVDGQCVCNEGFTGEDCS), 218–249 (QLACPSDCNDQGKCVNGVCVCFEGYSGVDCSR), 250–280 (ETCPVPCSEEHGRCVDGRCVCQEGFAGEDCN), 281–311 (EPLCLHNCHGRGRCVENECVCDEGFTGEDCG), 312–342 (ELICPKDCFDRGRCINGTCYCDEGFEGEDCG), 343–373 (RLACPHGCRGRGRCEEGQCVCDEGFAGADCS), 374–404 (ERRCPSDCHNRGRCLDGRCECDDGFEGEDCG), 405–435 (ELRCPGGCSGHGRCVNGQCVCDEGRTGEDCS), 436–466 (QLRCPNDCHGRGRCVQGRCECEHGFQGYDCS), 467–497 (EMSCPHDCHQHGRCVNGMCVCDDGYTGEDCR), 498–528 (ELRCPGDCSQRGRCVDGRCVCEHGFAGPDCA), 529–559 (DLACPSDCHGRGRCVNGQCVCHEGFTGKDCG), 560–589 (QRRCPGDCHGQGRCVDGQCVCHEGFTGLDC), and 590–620 (GQRSCPNDCSNWGQCVSGRCICNEGYSGEDC). Cystine bridges form between Cys190/Cys200, Cys194/Cys205, Cys207/Cys216, Cys221/Cys231, Cys225/Cys236, Cys238/Cys247, Cys252/Cys263, Cys256/Cys268, Cys270/Cys279, Cys284/Cys294, Cys288/Cys299, Cys301/Cys310, Cys315/Cys325, Cys319/Cys330, Cys332/Cys341, Cys346/Cys356, Cys350/Cys361, Cys363/Cys372, Cys377/Cys387, Cys381/Cys392, Cys394/Cys403, Cys408/Cys418, Cys412/Cys423, Cys425/Cys434, Cys439/Cys449, Cys443/Cys454, Cys456/Cys465, Cys470/Cys480, Cys474/Cys485, Cys487/Cys496, Cys501/Cys511, Cys505/Cys516, Cys518/Cys527, Cys532/Cys542, Cys536/Cys547, Cys549/Cys558, Cys563/Cys573, Cys567/Cys578, Cys580/Cys589, Cys594/Cys604, Cys598/Cys609, and Cys611/Cys620. N-linked (GlcNAc...) asparagine glycosylation occurs at Asn327. Fibronectin type-III domains lie at 625-717 (PPKD…TPEG), 718-801 (LKFK…VTTT), 805-894 (APSQ…TGLD), 895-988 (APRN…LDPP), 989-1075 (KDFR…AGEP), 1076-1166 (EIGN…EAEP), 1167-1256 (EVDN…TAMG), 1257-1346 (SPKE…ALDG), 1347-1433 (PSGL…TDLD), and 1434-1522 (SPRD…IGLL). N-linked (GlcNAc...) asparagine glycosylation is present at Asn788. Thr905 carries the phosphothreonine modification. Residues Asn1034, Asn1079, and Asn1121 are each glycosylated (N-linked (GlcNAc...) asparagine). Asn1354 carries N-linked (GlcNAc...) asparagine glycosylation. The Fibrinogen C-terminal domain maps to 1520 to 1735 (GLLYPFPRDC…FAEMKLRPSN (216 aa)).

It belongs to the tenascin family. Homohexamer; disulfide-linked. A homotrimer may be formed in the triple coiled-coil region and may be stabilized by disulfide rings at both ends. Two of such half-hexabrachions may be disulfide linked within the central globule. Interacts with CSPG4. Interacts (via the 3rd fibronectin type-III domain) with integrin ITGA9:ITGB1. In terms of tissue distribution, submaxillary glands and brain.

It is found in the secreted. The protein resides in the extracellular space. Its subcellular location is the extracellular matrix. In terms of biological role, extracellular matrix protein implicated in guidance of migrating neurons as well as axons during development, synaptic plasticity as well as neuronal regeneration. Promotes neurite outgrowth from cortical neurons grown on a monolayer of astrocytes. Ligand for integrins alpha-8/beta-1, alpha-9/beta-1, alpha-V/beta-3 and alpha-V/beta-6. In tumors, stimulates angiogenesis by elongation, migration and sprouting of endothelial cells. This Sus scrofa (Pig) protein is Tenascin (TNC).